We begin with the raw amino-acid sequence, 655 residues long: Hepatocyte growth factor activator serine protease (655 aa).

An N-terminal signal peptide occupies residues 1-35; that stretch reads MGRWAWVPSPWPPPGLGPFLLLLLLLLLLPRGFQP. Residues 36-372 constitute a propeptide, removed in mature form; the sequence is QPGGNRTESP…RLEACESLTR (337 aa). N-linked (GlcNAc...) asparagine glycans are attached at residues asparagine 40 and asparagine 48. The disordered stretch occupies residues 64-102; sequence TSETPATSAPEAEGPQSGGLPPPPRAVPSSSSPQAQALT. Residues 103-150 enclose the Fibronectin type-II domain; the sequence is EDGRPCRFPFRYGGRMLHACTSEGSAHRKWCATTHNYDRDRAWGYCVE. 19 cysteine pairs are disulfide-bonded: cysteine 108–cysteine 133, cysteine 122–cysteine 148, cysteine 164–cysteine 175, cysteine 169–cysteine 186, cysteine 188–cysteine 197, cysteine 202–cysteine 230, cysteine 228–cysteine 237, cysteine 245–cysteine 256, cysteine 250–cysteine 267, cysteine 269–cysteine 278, cysteine 286–cysteine 367, cysteine 307–cysteine 349, cysteine 338–cysteine 362, cysteine 394–cysteine 521, cysteine 432–cysteine 448, cysteine 440–cysteine 510, cysteine 535–cysteine 604, cysteine 567–cysteine 583, and cysteine 594–cysteine 622. Residues 160-198 form the EGF-like 1 domain; sequence ALDPCASGPCLNGGSCSNTQDPQSYHCSCPRAFTGKDCG. The Fibronectin type-I domain occupies 200–240; it reads EKCFDETRYEYLEGGDRWARVRQGHVEQCECFGGRTWCEGT. Positions 241 to 279 constitute an EGF-like 2 domain; sequence RHTACLSSPCLNGGTCHLIVATGTTVCACPPGFAGRLCN. A Kringle domain is found at 286–367; sequence CFLGNGTGYR…SWEYCRLEAC (82 aa). N-linked (GlcNAc...) asparagine glycosylation occurs at asparagine 290. The region spanning 408–646 is the Peptidase S1 domain; it reads IIGGSSSLPG…YVDWINDRIR (239 aa). Residue histidine 447 is the Charge relay system of the active site. N-linked (GlcNAc...) asparagine glycans are attached at residues asparagine 468 and asparagine 492. The Charge relay system role is filled by aspartate 497. N-linked (GlcNAc...) asparagine glycosylation occurs at asparagine 546. Serine 598 functions as the Charge relay system in the catalytic mechanism.

This sequence belongs to the peptidase S1 family. As to quaternary structure, heterodimer of a short chain and a long chain linked by a disulfide bond. The active form of HGFAC presents in the serum is derived from the COOH-terminal region of the precursor by the cleavage of bonds between Arg-372 and Val-373 and Arg-407 and Ile-408. Liver.

It is found in the secreted. Functionally, serine protease that hydrolyzes the inactive zymogen hepatocyte growth factor (HGFsc) to an activated disulfide-linked heterodimer, then initiating hepatocyte growth factor receptor signaling pathway. In Homo sapiens (Human), this protein is Hepatocyte growth factor activator serine protease.